A 197-amino-acid polypeptide reads, in one-letter code: Glycerol-3-phosphate acyltransferase (197 aa).

Transmembrane regions (helical) follow at residues leucine 6–valine 26, alanine 58–leucine 78, methionine 82–phenylalanine 102, alanine 116–alanine 136, and phenylalanine 157–isoleucine 177.

The protein belongs to the PlsY family. As to quaternary structure, probably interacts with PlsX.

It is found in the cell inner membrane. It carries out the reaction an acyl phosphate + sn-glycerol 3-phosphate = a 1-acyl-sn-glycero-3-phosphate + phosphate. It functions in the pathway lipid metabolism; phospholipid metabolism. Functionally, catalyzes the transfer of an acyl group from acyl-phosphate (acyl-PO(4)) to glycerol-3-phosphate (G3P) to form lysophosphatidic acid (LPA). This enzyme utilizes acyl-phosphate as fatty acyl donor, but not acyl-CoA or acyl-ACP. The sequence is that of Glycerol-3-phosphate acyltransferase from Ruthia magnifica subsp. Calyptogena magnifica.